Here is a 182-residue protein sequence, read N- to C-terminus: Nudix hydrolase 17, mitochondrial (182 aa).

The transit peptide at 1 to 26 (MGVEKMVCLASRTGRQFQRYNKGRRQ) directs the protein to the mitochondrion. The Nudix hydrolase domain occupies 27 to 158 (VVGCVPYRFK…WMKEALDVLV (132 aa)). A Nudix box motif is present at residues 65 to 86 (GGWELDESVEEAASRECLEEAG). Mg(2+) is bound by residues Glu-80 and Glu-84.

The protein belongs to the Nudix hydrolase family. The cofactor is Mg(2+). Requires Mn(2+) as cofactor. As to expression, expressed in roots, leaves, stems and inflorescences.

Its subcellular location is the mitochondrion. In terms of biological role, probably mediates the hydrolysis of some nucleoside diphosphate derivatives. This chain is Nudix hydrolase 17, mitochondrial (NUDT17), found in Arabidopsis thaliana (Mouse-ear cress).